Reading from the N-terminus, the 252-residue chain is Acetoacetate decarboxylase (252 aa).

Lysine 116 acts as the Schiff-base intermediate with acetoacetate in catalysis.

The protein belongs to the ADC family.

It catalyses the reaction acetoacetate + H(+) = acetone + CO2. Its function is as follows. Catalyzes the conversion of acetoacetate to acetone and carbon dioxide. The sequence is that of Acetoacetate decarboxylase from Paraburkholderia phytofirmans (strain DSM 17436 / LMG 22146 / PsJN) (Burkholderia phytofirmans).